The chain runs to 446 residues: Asparagine--tRNA ligase (446 aa).

The protein belongs to the class-II aminoacyl-tRNA synthetase family. Homodimer.

The protein resides in the cytoplasm. The catalysed reaction is tRNA(Asn) + L-asparagine + ATP = L-asparaginyl-tRNA(Asn) + AMP + diphosphate + H(+). The sequence is that of Asparagine--tRNA ligase from Sorangium cellulosum (strain So ce56) (Polyangium cellulosum (strain So ce56)).